The following is a 465-amino-acid chain: Glycine--tRNA ligase (465 aa).

Residues arginine 98 and glutamate 174 each coordinate substrate. ATP is bound by residues 206-208 (RNE), 216-221 (FRTREF), 290-291 (EL), and 334-337 (GADR). 221–225 (FEQME) contacts substrate. Residue 330–334 (EPSLG) coordinates substrate.

The protein belongs to the class-II aminoacyl-tRNA synthetase family. In terms of assembly, homodimer.

The protein localises to the cytoplasm. The enzyme catalyses tRNA(Gly) + glycine + ATP = glycyl-tRNA(Gly) + AMP + diphosphate. Catalyzes the attachment of glycine to tRNA(Gly). The sequence is that of Glycine--tRNA ligase from Agathobacter rectalis (strain ATCC 33656 / DSM 3377 / JCM 17463 / KCTC 5835 / VPI 0990) (Eubacterium rectale).